The chain runs to 96 residues: (4S)-4-hydroxy-5-phosphonooxypentane-2,3-dione isomerase (96 aa).

Residues 2–91 (HVTLVEINVH…MTGPRKKRLF (90 aa)) enclose the ABM domain.

The protein belongs to the LsrG family. Homodimer.

It localises to the cytoplasm. It catalyses the reaction (2S)-2-hydroxy-3,4-dioxopentyl phosphate = 3-hydroxy-2,4-dioxopentyl phosphate. Involved in the degradation of phospho-AI-2, thereby terminating induction of the lsr operon and closing the AI-2 signaling cycle. Catalyzes the conversion of (4S)-4-hydroxy-5-phosphonooxypentane-2,3-dione (P-DPD) to 3-hydroxy-5-phosphonooxypentane-2,4-dione (P-HPD). In Escherichia coli O157:H7, this protein is (4S)-4-hydroxy-5-phosphonooxypentane-2,3-dione isomerase.